A 292-amino-acid polypeptide reads, in one-letter code: Elongation factor Ts (292 aa).

An involved in Mg(2+) ion dislocation from EF-Tu region spans residues 80–83 (TDFV).

Belongs to the EF-Ts family.

It is found in the cytoplasm. In terms of biological role, associates with the EF-Tu.GDP complex and induces the exchange of GDP to GTP. It remains bound to the aminoacyl-tRNA.EF-Tu.GTP complex up to the GTP hydrolysis stage on the ribosome. The polypeptide is Elongation factor Ts (Mycoplasmopsis synoviae (strain 53) (Mycoplasma synoviae)).